Consider the following 695-residue polypeptide: DSC E3 ubiquitin ligase complex subunit 1 (695 aa).

The first 25 residues, 1–25 (MDRRRWVPSTPVVTLLLLFMLFAPA), serve as a signal peptide directing secretion. The Lumenal segment spans residues 26–319 (PRLPSRNGES…KGPRNFVLEN (294 aa)). The helical transmembrane segment at 320–340 (HLVRFSSLYIFIVLSQIFVLL) threads the bilayer. Topologically, residues 341–353 (RQMRINSPSHVQR) are cytoplasmic. A helical membrane pass occupies residues 354–374 (LSFLTIAMQAGLDAYIAIFFL). Over 375–382 (STNAVIEK) the chain is Lumenal. A helical membrane pass occupies residues 383 to 403 (GYLPFVSVAFLSLVPSVMFTM). Residues 404–486 (RYLALILRVQ…QRDWSAVCLR (83 aa)) are Cytoplasmic-facing. A disordered region spans residues 419–473 (PPAPRPVTNNSSNNNTNQSNASNENSPNAPSAANDNTETTTVNPPQEDDQPMTQH). A compositionally biased stretch (low complexity) spans 427-454 (NNSSNNNTNQSNASNENSPNAPSAANDN). The helical transmembrane segment at 487–507 (FYFIILVVCIASLYSAFWPVI) threads the bilayer. The Lumenal portion of the chain corresponds to 508–509 (YR). Residues 510–530 (FYFISALIFTSYSFWIPQIIQ) form a helical membrane-spanning segment. Residues 531 to 540 (NVKQGTSRSF) lie on the Cytoplasmic side of the membrane. Residues 541-561 (TWTYILGASVLRLYLPLAIFI) traverse the membrane as a helical segment. The Lumenal segment spans residues 562–572 (DSELILGFPPK). Residues 573–593 (YFFALGLVLWMLFQVLVLLVQ) traverse the membrane as a helical segment. Over 594-695 (DTLGPRFFLP…PVCRCHLPAV (102 aa)) the chain is Cytoplasmic. An RING-type; atypical zinc finger spans residues 634–689 (CPICMQPIELVSTGSTLNPASMMVRRNYMLTPCHHLYHRQCLLQWMETRSICPVCR).

Component of the DSC E3 ubiquitin ligase complex composed of dsc1, dsc2, dsc3 and dsc4.

The protein resides in the endoplasmic reticulum membrane. Its subcellular location is the golgi apparatus membrane. The catalysed reaction is S-ubiquitinyl-[E2 ubiquitin-conjugating enzyme]-L-cysteine + [acceptor protein]-L-lysine = [E2 ubiquitin-conjugating enzyme]-L-cysteine + N(6)-ubiquitinyl-[acceptor protein]-L-lysine.. It functions in the pathway protein modification; protein ubiquitination. Functionally, catalytic component of the DSC E3 ubiquitin ligase complex which is required for the sre1 transcriptional activator proteolytic cleavage to release the soluble transcription factor from the membrane in low oxygen or sterol conditions. The complex also plays an important role in the multivesicular body (MVB) pathway and functions in a post-endoplasmic reticulum pathway for protein degradation. This is DSC E3 ubiquitin ligase complex subunit 1 (dsc1) from Schizosaccharomyces pombe (strain 972 / ATCC 24843) (Fission yeast).